The following is a 199-amino-acid chain: Protein GrpE (199 aa).

Residues Met1–Thr50 are disordered. Residues Glu11–Ala46 show a composition bias toward low complexity.

This sequence belongs to the GrpE family. As to quaternary structure, homodimer.

The protein localises to the cytoplasm. In terms of biological role, participates actively in the response to hyperosmotic and heat shock by preventing the aggregation of stress-denatured proteins, in association with DnaK and GrpE. It is the nucleotide exchange factor for DnaK and may function as a thermosensor. Unfolded proteins bind initially to DnaJ; upon interaction with the DnaJ-bound protein, DnaK hydrolyzes its bound ATP, resulting in the formation of a stable complex. GrpE releases ADP from DnaK; ATP binding to DnaK triggers the release of the substrate protein, thus completing the reaction cycle. Several rounds of ATP-dependent interactions between DnaJ, DnaK and GrpE are required for fully efficient folding. The sequence is that of Protein GrpE from Lactiplantibacillus plantarum (strain ATCC BAA-793 / NCIMB 8826 / WCFS1) (Lactobacillus plantarum).